Reading from the N-terminus, the 119-residue chain is Large ribosomal subunit protein bL20 (119 aa).

The protein belongs to the bacterial ribosomal protein bL20 family.

Functionally, binds directly to 23S ribosomal RNA and is necessary for the in vitro assembly process of the 50S ribosomal subunit. It is not involved in the protein synthesizing functions of that subunit. The chain is Large ribosomal subunit protein bL20 from Streptococcus gordonii (strain Challis / ATCC 35105 / BCRC 15272 / CH1 / DL1 / V288).